Reading from the N-terminus, the 636-residue chain is Chaperone protein DnaK (636 aa).

Phosphothreonine; by autocatalysis is present on Thr-198. The span at 602–613 shows a compositional bias: low complexity; the sequence is QPAGEEQAGAAA. The tract at residues 602-636 is disordered; that stretch reads QPAGEEQAGAAAHEGEAKGEKVVDADFEEVKEDKK. Residues 614-625 are compositionally biased toward basic and acidic residues; sequence HEGEAKGEKVVD. A compositionally biased stretch (acidic residues) spans 626-636; it reads ADFEEVKEDKK.

Belongs to the heat shock protein 70 family.

Functionally, acts as a chaperone. This Geotalea daltonii (strain DSM 22248 / JCM 15807 / FRC-32) (Geobacter daltonii) protein is Chaperone protein DnaK.